Here is a 693-residue protein sequence, read N- to C-terminus: Glycine--tRNA ligase beta subunit (693 aa).

Belongs to the class-II aminoacyl-tRNA synthetase family. In terms of assembly, tetramer of two alpha and two beta subunits.

Its subcellular location is the cytoplasm. It carries out the reaction tRNA(Gly) + glycine + ATP = glycyl-tRNA(Gly) + AMP + diphosphate. The protein is Glycine--tRNA ligase beta subunit of Ligilactobacillus salivarius (strain UCC118) (Lactobacillus salivarius).